The sequence spans 423 residues: Glucuronoxylanase XynC (423 aa).

A signal peptide spans 1-33 (MMSSVKKTICVLLVCFTMMSVMLLGPGVTEVSA). Catalysis depends on Glu-172, which acts as the Proton donor. The active-site Nucleophile is Glu-261.

This sequence belongs to the glycosyl hydrolase 30 family.

Its subcellular location is the secreted. It carries out the reaction Endohydrolysis of (1-&gt;4)-beta-D-xylosyl links in some glucuronoarabinoxylans.. It participates in glycan degradation; xylan degradation. Its function is as follows. Catalyzes the depolymerization of methylglucuronoxylan (MeGAXn). It cleaves the beta-1,4-xylosidic bond penultimate to that linking carbon one of the xylose residue substituted with alpha-1,2-linked 4-O-methyl-D-glucuronate (MeGA). The polypeptide is Glucuronoxylanase XynC (xynC) (Bacillus subtilis).